The chain runs to 284 residues: Tropomyosin (284 aa).

A coiled-coil region spans residues 1–284; the sequence is MDAIKKKMQA…DQTFAEIAGY (284 aa). The tract at residues 103-133 is disordered; the sequence is EEKLATTTEKLEEASKAADESERNRKVLEGR.

This sequence belongs to the tropomyosin family. In terms of assembly, homodimer.

Tropomyosin, in association with the troponin complex, plays a central role in the calcium dependent regulation of muscle contraction. The polypeptide is Tropomyosin (Chlamys nipponensis akazara (Akazara scallop)).